The primary structure comprises 480 residues: EGF-like repeat and discoidin I-like domain-containing protein 3 (480 aa).

Residues 1 to 23 (MKRSVAVWLLVGLSLGVPQFGKG) form the signal peptide. In terms of domain architecture, EGF-like 1 spans 24–60 (DICDPNPCENGGICLPGLADGSFSCECPDGFTDPNCS). 3 disulfides stabilise this stretch: Cys26–Cys37, Cys31–Cys48, and Cys50–Cys59. Thr73 is a glycosylation site (O-linked (GalNAc...) threonine). EGF-like domains follow at residues 74 to 117 (SAGP…IHCQ) and 119 to 155 (NINE…RNCQ). 3 cysteine pairs are disulfide-bonded: Cys78–Cys89, Cys83–Cys105, and Cys107–Cys116. The O-linked (Fuc...) threonine glycan is linked to Thr88. Residues 96-98 (RGD) carry the Cell attachment site motif. Positions 119, 120, and 122 each coordinate Ca(2+). 6 disulfides stabilise this stretch: Cys123–Cys134, Cys128–Cys143, Cys145–Cys154, Cys158–Cys314, Cys301–Cys305, and Cys319–Cys476. Ca(2+) contacts are provided by Asp136 and Leu137. The N-linked (GlcNAc...) asparagine glycan is linked to Asn140. F5/8 type C domains lie at 158–314 (CSGP…LLGC) and 319–476 (CSEP…LLGC).

It localises to the secreted. Promotes adhesion of endothelial cells through interaction with the alpha-v/beta-3 integrin receptor. Inhibits formation of vascular-like structures. May be involved in regulation of vascular morphogenesis of remodeling in embryonic development. The sequence is that of EGF-like repeat and discoidin I-like domain-containing protein 3 (EDIL3) from Homo sapiens (Human).